A 443-amino-acid chain; its full sequence is Protein translocase subunit SecY (443 aa).

10 consecutive transmembrane segments (helical) span residues 24 to 44, 77 to 97, 125 to 145, 154 to 174, 183 to 203, 217 to 237, 274 to 294, 317 to 337, 370 to 390, and 397 to 417; these read LFVI…IPGI, IFAL…LLTV, LVLA…MPGM, FAFY…LMWL, IGNG…PPAI, FLVL…VVFV, VIPA…ASWF, YVLL…ALVF, MTRL…IPEF, and VPFY…MDFM.

The protein belongs to the SecY/SEC61-alpha family. In terms of assembly, component of the Sec protein translocase complex. Heterotrimer consisting of SecY, SecE and SecG subunits. The heterotrimers can form oligomers, although 1 heterotrimer is thought to be able to translocate proteins. Interacts with the ribosome. Interacts with SecDF, and other proteins may be involved. Interacts with SecA.

The protein localises to the cell inner membrane. The central subunit of the protein translocation channel SecYEG. Consists of two halves formed by TMs 1-5 and 6-10. These two domains form a lateral gate at the front which open onto the bilayer between TMs 2 and 7, and are clamped together by SecE at the back. The channel is closed by both a pore ring composed of hydrophobic SecY resides and a short helix (helix 2A) on the extracellular side of the membrane which forms a plug. The plug probably moves laterally to allow the channel to open. The ring and the pore may move independently. This is Protein translocase subunit SecY from Escherichia coli O157:H7.